The following is a 103-amino-acid chain: Large ribosomal subunit protein eL30 (103 aa).

The protein belongs to the eukaryotic ribosomal protein eL30 family.

The chain is Large ribosomal subunit protein eL30 from Methanothrix thermoacetophila (strain DSM 6194 / JCM 14653 / NBRC 101360 / PT) (Methanosaeta thermophila).